A 156-amino-acid chain; its full sequence is ATP synthase subunit b (156 aa).

Residues 3 to 23 form a helical membrane-spanning segment; that stretch reads INFTLLAQALAFAGLIWIIAT.

It belongs to the ATPase B chain family. As to quaternary structure, F-type ATPases have 2 components, F(1) - the catalytic core - and F(0) - the membrane proton channel. F(1) has five subunits: alpha(3), beta(3), gamma(1), delta(1), epsilon(1). F(0) has three main subunits: a(1), b(2) and c(10-14). The alpha and beta chains form an alternating ring which encloses part of the gamma chain. F(1) is attached to F(0) by a central stalk formed by the gamma and epsilon chains, while a peripheral stalk is formed by the delta and b chains.

It is found in the cell membrane. Its function is as follows. F(1)F(0) ATP synthase produces ATP from ADP in the presence of a proton or sodium gradient. F-type ATPases consist of two structural domains, F(1) containing the extramembraneous catalytic core and F(0) containing the membrane proton channel, linked together by a central stalk and a peripheral stalk. During catalysis, ATP synthesis in the catalytic domain of F(1) is coupled via a rotary mechanism of the central stalk subunits to proton translocation. Component of the F(0) channel, it forms part of the peripheral stalk, linking F(1) to F(0). The chain is ATP synthase subunit b from Stenotrophomonas maltophilia (strain K279a).